We begin with the raw amino-acid sequence, 257 residues long: UPF0246 protein Spea_1078 (257 aa).

It belongs to the UPF0246 family.

This chain is UPF0246 protein Spea_1078, found in Shewanella pealeana (strain ATCC 700345 / ANG-SQ1).